We begin with the raw amino-acid sequence, 232 residues long: Thiamine import ATP-binding protein ThiQ (232 aa).

The ABC transporter domain maps to 2-230 (LKLTDITWLY…KASASALLGI (229 aa)). 32–39 (GPSGAGKS) is an ATP binding site.

The protein belongs to the ABC transporter superfamily. Thiamine importer (TC 3.A.1.19.1) family. The complex is composed of two ATP-binding proteins (ThiQ), two transmembrane proteins (ThiP) and a solute-binding protein (ThiB).

Its subcellular location is the cell inner membrane. It catalyses the reaction thiamine(out) + ATP + H2O = thiamine(in) + ADP + phosphate + H(+). Its function is as follows. Part of the ABC transporter complex ThiBPQ involved in thiamine import. Responsible for energy coupling to the transport system. In Shigella sonnei (strain Ss046), this protein is Thiamine import ATP-binding protein ThiQ.